We begin with the raw amino-acid sequence, 199 residues long: ATP-dependent Clp protease proteolytic subunit (199 aa).

Ser97 (nucleophile) is an active-site residue. His122 is an active-site residue.

It belongs to the peptidase S14 family. Fourteen ClpP subunits assemble into 2 heptameric rings which stack back to back to give a disk-like structure with a central cavity, resembling the structure of eukaryotic proteasomes.

The protein resides in the cytoplasm. The enzyme catalyses Hydrolysis of proteins to small peptides in the presence of ATP and magnesium. alpha-casein is the usual test substrate. In the absence of ATP, only oligopeptides shorter than five residues are hydrolyzed (such as succinyl-Leu-Tyr-|-NHMec, and Leu-Tyr-Leu-|-Tyr-Trp, in which cleavage of the -Tyr-|-Leu- and -Tyr-|-Trp bonds also occurs).. Functionally, cleaves peptides in various proteins in a process that requires ATP hydrolysis. Has a chymotrypsin-like activity. Plays a major role in the degradation of misfolded proteins. The chain is ATP-dependent Clp protease proteolytic subunit from Geobacter sulfurreducens (strain ATCC 51573 / DSM 12127 / PCA).